A 377-amino-acid polypeptide reads, in one-letter code: 3-dehydroquinate synthase (377 aa).

Residues 113-117, 137-138, Lys150, Lys159, and 177-180 each bind NAD(+); these read GVIGD, TT, and FLDT. Zn(2+) is bound by residues Glu192, His254, and His273.

The protein belongs to the sugar phosphate cyclases superfamily. Dehydroquinate synthase family. It depends on Co(2+) as a cofactor. The cofactor is Zn(2+). Requires NAD(+) as cofactor.

The protein resides in the cytoplasm. It carries out the reaction 7-phospho-2-dehydro-3-deoxy-D-arabino-heptonate = 3-dehydroquinate + phosphate. It participates in metabolic intermediate biosynthesis; chorismate biosynthesis; chorismate from D-erythrose 4-phosphate and phosphoenolpyruvate: step 2/7. In terms of biological role, catalyzes the conversion of 3-deoxy-D-arabino-heptulosonate 7-phosphate (DAHP) to dehydroquinate (DHQ). The polypeptide is 3-dehydroquinate synthase (Bartonella quintana (strain Toulouse) (Rochalimaea quintana)).